The primary structure comprises 391 residues: Ribonucleoside-diphosphate reductase small chain (391 aa).

The Fe cation site is built by Asp-135, Glu-166, and His-169. The active site involves Tyr-173. Glu-229, Glu-263, and His-266 together coordinate Fe cation.

The protein belongs to the ribonucleoside diphosphate reductase small chain family. Heterodimer of a large and a small subunit. It depends on Fe cation as a cofactor.

It is found in the nucleus. The protein resides in the cytoplasm. The enzyme catalyses a 2'-deoxyribonucleoside 5'-diphosphate + [thioredoxin]-disulfide + H2O = a ribonucleoside 5'-diphosphate + [thioredoxin]-dithiol. Functionally, provides the precursors necessary for DNA synthesis. Catalyzes the biosynthesis of deoxyribonucleotides from the corresponding ribonucleotides. The chain is Ribonucleoside-diphosphate reductase small chain (suc22) from Schizosaccharomyces pombe (strain 972 / ATCC 24843) (Fission yeast).